Reading from the N-terminus, the 229-residue chain is MRPFFCAAFGAPSCMRAANALSGGMDYPDLSLEEAAQARGYTRIAGVDEVGRGPLAGPVTAAAVVLDLADLPEGLNDSKKLTPRRRAALEPEIMARASYAVAHASVEEIDHHNILRASHLAMERAVAALDPQPDYLLIDGNLIPRALHIPAEAVVKGDGRSLSIAAASILAKEARDRIMVDLAQQFPGYGWERNAGYPSKQHRDALIKIGVTPHHRRSFKPVHKILYQE.

The RNase H type-2 domain occupies 42–229 (TRIAGVDEVG…KPVHKILYQE (188 aa)). A divalent metal cation-binding residues include aspartate 48, glutamate 49, and aspartate 139.

Belongs to the RNase HII family. It depends on Mn(2+) as a cofactor. The cofactor is Mg(2+).

The protein resides in the cytoplasm. It carries out the reaction Endonucleolytic cleavage to 5'-phosphomonoester.. Its function is as follows. Endonuclease that specifically degrades the RNA of RNA-DNA hybrids. In Ruegeria sp. (strain TM1040) (Silicibacter sp.), this protein is Ribonuclease HII.